Reading from the N-terminus, the 191-residue chain is Signal peptidase IB (191 aa).

The Cytoplasmic segment spans residues 1–7 (MKKEILE). Residues 8 to 28 (WIISIAVAFVILFIVGKFIVT) traverse the membrane as a helical segment. Residues 29-191 (PYTIKGESMD…HNFNPENTKN (163 aa)) lie on the Extracellular side of the membrane. Catalysis depends on residues Ser36 and Lys77.

This sequence belongs to the peptidase S26 family.

The protein resides in the cell membrane. It catalyses the reaction Cleavage of hydrophobic, N-terminal signal or leader sequences from secreted and periplasmic proteins.. Essential for cell viability. In Staphylococcus aureus (strain COL), this protein is Signal peptidase IB (spsB).